The chain runs to 209 residues: Large ribosomal subunit protein uL3 (209 aa).

The disordered stretch occupies residues Arg-141 to Gly-163.

It belongs to the universal ribosomal protein uL3 family. As to quaternary structure, part of the 50S ribosomal subunit. Forms a cluster with proteins L14 and L19.

In terms of biological role, one of the primary rRNA binding proteins, it binds directly near the 3'-end of the 23S rRNA, where it nucleates assembly of the 50S subunit. The polypeptide is Large ribosomal subunit protein uL3 (Clostridium botulinum (strain Kyoto / Type A2)).